Here is a 116-residue protein sequence, read N- to C-terminus: Tyrosine-protein phosphatase 14 (116 aa).

The Tyrosine-protein phosphatase domain occupies 1 to 116 (WRMITQEKAQ…SLKNPGPVIV (116 aa)). Substrate is bound at residue Asp84.

The protein belongs to the protein-tyrosine phosphatase family.

The enzyme catalyses O-phospho-L-tyrosyl-[protein] + H2O = L-tyrosyl-[protein] + phosphate. The protein is Tyrosine-protein phosphatase 14 (STY-14) of Styela plicata (Wrinkled sea squirt).